The primary structure comprises 301 residues: Putative S-adenosyl-L-methionine-dependent methyltransferase MT0851 (301 aa).

Residues Asp-127 and 156-157 contribute to the S-adenosyl-L-methionine site; that span reads DL.

It belongs to the UPF0677 family.

Exhibits S-adenosyl-L-methionine-dependent methyltransferase activity. This is Putative S-adenosyl-L-methionine-dependent methyltransferase MT0851 from Mycobacterium tuberculosis (strain CDC 1551 / Oshkosh).